Consider the following 295-residue polypeptide: Chromatin modification-related protein YNG2 (295 aa).

The disordered stretch occupies residues 151–208 (NGTAGSGSSSGRKRPASSSSANGKGQKRKQQKKERSRSHQRAGTVSRDVSPNAGIGRD). Residues 156–171 (SGSSSGRKRPASSSSA) are compositionally biased toward low complexity. Positions 175–190 (GQKRKQQKKERSRSHQ) are enriched in basic residues. A PHD-type zinc finger spans residues 233-282 (QLYCFCQRVSYGEMVACDGPNCKYEWFHYSCVNLTEPPKGQWYCPECRLE). 8 residues coordinate Zn(2+): Cys-236, Cys-238, Cys-249, Cys-254, His-260, Cys-263, Cys-276, and Cys-279.

Belongs to the ING family. Interacts with H3K4me3 and to a lesser extent with H3K4me2. Component of the NuA4 histone acetyltransferase complex.

It localises to the nucleus. In terms of biological role, component of the NuA4 histone acetyltransferase complex which is involved in transcriptional activation of selected genes principally by acetylation of nucleosomal histone H4 and H2A. The NuA4 complex is also involved in DNA repair. Involved in cell cycle progression and meiosis. The chain is Chromatin modification-related protein YNG2 (YNG2) from Kluyveromyces lactis (strain ATCC 8585 / CBS 2359 / DSM 70799 / NBRC 1267 / NRRL Y-1140 / WM37) (Yeast).